A 396-amino-acid polypeptide reads, in one-letter code: 1-deoxy-D-xylulose 5-phosphate reductoisomerase (396 aa).

NADPH contacts are provided by Thr-10, Gly-11, Ser-12, Ile-13, Gly-36, Lys-37, Asn-38, and Asn-124. Lys-125 is a binding site for 1-deoxy-D-xylulose 5-phosphate. Residue Glu-126 coordinates NADPH. A Mn(2+)-binding site is contributed by Asp-150. 4 residues coordinate 1-deoxy-D-xylulose 5-phosphate: Ser-151, Glu-152, Ser-186, and His-209. Residue Glu-152 participates in Mn(2+) binding. Gly-215 contributes to the NADPH binding site. 1-deoxy-D-xylulose 5-phosphate contacts are provided by Ser-222, Asn-227, Lys-228, and Glu-231. Residue Glu-231 participates in Mn(2+) binding.

It belongs to the DXR family. The cofactor is Mg(2+). It depends on Mn(2+) as a cofactor.

The catalysed reaction is 2-C-methyl-D-erythritol 4-phosphate + NADP(+) = 1-deoxy-D-xylulose 5-phosphate + NADPH + H(+). It functions in the pathway isoprenoid biosynthesis; isopentenyl diphosphate biosynthesis via DXP pathway; isopentenyl diphosphate from 1-deoxy-D-xylulose 5-phosphate: step 1/6. In terms of biological role, catalyzes the NADPH-dependent rearrangement and reduction of 1-deoxy-D-xylulose-5-phosphate (DXP) to 2-C-methyl-D-erythritol 4-phosphate (MEP). The sequence is that of 1-deoxy-D-xylulose 5-phosphate reductoisomerase from Haemophilus ducreyi (strain 35000HP / ATCC 700724).